The chain runs to 30 residues: Rothein 3.1 (30 aa).

The residue at position 30 (Leu-30) is a Leucine amide.

As to expression, expressed by the skin dorsal glands.

It is found in the secreted. Its function is as follows. Lacks antimicrobial activity. Does not inhibit the formation of NO by neuronal nitric oxide. This chain is Rothein 3.1, found in Litoria rothii (Roth's tree frog).